The chain runs to 486 residues: Vicilin-like seed storage protein At3g22640 (486 aa).

Residues 1–22 (MAITNKLIITLLLLISIAVVHC) form the signal peptide. Residues 34-60 (PPQQGEQEGPRRRPGGGSGEGWEEEST) are disordered. Cupin type-1 domains lie at 64 to 223 (YHFR…ELLG) and 278 to 448 (FNLF…KVAE). Asparagine 168, asparagine 316, and asparagine 455 each carry an N-linked (GlcNAc...) asparagine glycan.

This sequence belongs to the 7S seed storage protein family. In terms of tissue distribution, predominantly expressed in the embryo and endosperm of developing seeds. Also present in seedlings.

Its function is as follows. Seed storage protein. In terms of biological role, (Microbial infection) Involved in tobacco mosaic virus (TMV) replication. Required for endoplasmic reticulum (ER) aggregations mediated by TMV main replicase (P126) upon viral infection. The chain is Vicilin-like seed storage protein At3g22640 from Arabidopsis thaliana (Mouse-ear cress).